We begin with the raw amino-acid sequence, 349 residues long: Phosphate acyltransferase (349 aa).

Belongs to the PlsX family. In terms of assembly, homodimer. Probably interacts with PlsY.

Its subcellular location is the cytoplasm. The catalysed reaction is a fatty acyl-[ACP] + phosphate = an acyl phosphate + holo-[ACP]. Its pathway is lipid metabolism; phospholipid metabolism. Its function is as follows. Catalyzes the reversible formation of acyl-phosphate (acyl-PO(4)) from acyl-[acyl-carrier-protein] (acyl-ACP). This enzyme utilizes acyl-ACP as fatty acyl donor, but not acyl-CoA. This Rhodopseudomonas palustris (strain BisA53) protein is Phosphate acyltransferase.